A 466-amino-acid polypeptide reads, in one-letter code: MAHANHFDVIVIGSGPGGEGAAMGLTKAGLKVAVVEKESSVGGGCTHWGTIPSKALRHAVSRIIEFNSNPLFCKNNSSLHATFSTILGHAKSVIDKQTRLRQGFYDRNQCQLIFGTARFTDAHTISVTQNDGTEEVYTADKFVIATGSRPYQPADVDFNHERIYDSDSILSLKHDPRHIIIYGAGVIGCEYASIFRGLGVKTDLINTRDRLLAFLDNEVSDALSYHFWNSGVVIRNDETYERIEGTEDGVIVHLQSGKKMKADCLLYANGRTGNTDKLNLPAVGLQGDSRGQLKVDGNYQTEVEHVYAVGDVIGYPSLASAAYDQGRFVAQAITKGKADGYLIDDIPTGIYTIPEISSVGKTEQELTAAKVPYEVGRSSFKHLARAQIAGKDIGSLKILFHRETKEILGIHCFGERAAEIIHIGQAIMEQKGEANTIEYFVNTTFNYPTMAEAYRVAALNGLNRLF.

36–45 lines the FAD pocket; it reads EKESSVGGGC.

Belongs to the class-I pyridine nucleotide-disulfide oxidoreductase family. FAD serves as cofactor.

It is found in the cytoplasm. It catalyses the reaction NAD(+) + NADPH = NADH + NADP(+). Its function is as follows. Conversion of NADPH, generated by peripheral catabolic pathways, to NADH, which can enter the respiratory chain for energy generation. The protein is Soluble pyridine nucleotide transhydrogenase of Vibrio vulnificus (strain CMCP6).